An 890-amino-acid polypeptide reads, in one-letter code: Exo-beta-D-glucosaminidase (890 aa).

An N-terminal signal peptide occupies residues 1–18 (MIAKAVAALLLGSGLASA). Residues 19 to 26 (AGTPLTSK) constitute a propeptide that is removed on maturation. 3 N-linked (GlcNAc...) asparagine glycosylation sites follow: Asn194, Asn334, and Asn438. Catalysis depends on Asp462, which acts as the Proton donor. Residue Glu537 is the Nucleophile of the active site. Asn576 and Asn687 each carry an N-linked (GlcNAc...) asparagine glycan.

Belongs to the glycosyl hydrolase 2 family. In terms of assembly, monomer.

It is found in the secreted. It localises to the extracellular space. It catalyses the reaction Hydrolysis of chitosan or chitosan oligosaccharides to remove successive D-glucosamine residues from the non-reducing termini.. Functionally, hydrolyzes chitosan and chitooligosaccharides with retention of anomeric configuration. Has no activity against beta-D-galactoside, beta-D-glucuronide, beta-D-mannoside, chitin, glycol chitosan, cellulose, N,N'-diacetylchitibiose and pNP-GlcNAc. The protein is Exo-beta-D-glucosaminidase of Hypocrea virens (Gliocladium virens).